We begin with the raw amino-acid sequence, 421 residues long: Acetate kinase (421 aa).

Mg(2+) is bound at residue Asn-7. ATP is bound at residue Lys-14. Substrate is bound at residue Arg-91. Asp-148 acts as the Proton donor/acceptor in catalysis. ATP-binding positions include His-208–Gly-212 and Asp-283–Arg-285. Glu-387 serves as a coordination point for Mg(2+).

It belongs to the acetokinase family. As to quaternary structure, homodimer. Mg(2+) serves as cofactor. The cofactor is Mn(2+).

It localises to the cytoplasm. It catalyses the reaction acetate + ATP = acetyl phosphate + ADP. It functions in the pathway metabolic intermediate biosynthesis; acetyl-CoA biosynthesis; acetyl-CoA from acetate: step 1/2. Its function is as follows. Catalyzes the formation of acetyl phosphate from acetate and ATP. Can also catalyze the reverse reaction. The chain is Acetate kinase from Geobacter metallireducens (strain ATCC 53774 / DSM 7210 / GS-15).